A 346-amino-acid polypeptide reads, in one-letter code: uncharacterized protein (346 aa).

Residues 322–346 are disordered; the sequence is GRDGGYRETTSPPTGRGRNVRGSHA.

This is an uncharacterized protein from Mycobacterium tuberculosis (strain CDC 1551 / Oshkosh).